The primary structure comprises 1135 residues: WASH complex subunit 4 (1135 aa).

A2 is subject to N-acetylalanine.

The protein belongs to the SWIP family. Probable component of the WASH complex.

The polypeptide is WASH complex subunit 4 (Dictyostelium discoideum (Social amoeba)).